The primary structure comprises 207 residues: Abscisic acid receptor PYL4 (207 aa).

An START-like region spans residues 45 to 195 (HEVGPNQCCS…NLQSLAKIAE (151 aa)). An intrachain disulfide couples C52 to C176. Residues K81, 111 to 116 (AASSTE), 138 to 144 (RLSNYRS), and E160 each bind abscisate. Positions 107–111 (SGLPA) match the Gate loop motif. A Latch loop motif is present at residues 137-139 (HRL).

It belongs to the PYR/PYL/RCAR abscisic acid intracellular receptor family. Monomer. Homodimer. Binds ABA on one subunit only. Interacts with HAB1, ABI1 and ABI2, and possibly with other PP2Cs. Binds to CARs protein in an ABA-independent manner, both at the plasma membrane and in the nucleus. Interacts directly with CAR1 and CAR4. Interacts with TOPP1. Interacts with DDA1. Interacts with FREE1 (via N-terminus). Interacts with the E3 ubiquitin-protein ligase RSL1 at the plasma membrane. Post-translationally, ubiquitynated and degraded by the proteasome upon binding to the E3 ubiquitin-protein ligase RSL1 at the plasma membrane.

Its subcellular location is the cytoplasm. It is found in the nucleus. It localises to the cell membrane. The protein resides in the vacuole. In terms of biological role, receptor for abscisic acid (ABA) required for ABA-mediated responses such as stomatal closure and germination inhibition. Inhibits the activity of group-A protein phosphatases type 2C (PP2Cs) when activated by ABA. Can be activated by both (-)-ABA and (+)-ABA. This chain is Abscisic acid receptor PYL4, found in Arabidopsis thaliana (Mouse-ear cress).